The sequence spans 40 residues: uncharacterized protein (40 aa).

Over residues 1 to 14 (MNRMLSLSVQSQRA) the composition is skewed to polar residues. The interval 1–25 (MNRMLSLSVQSQRAPASPSPYGLKI) is disordered.

This is an uncharacterized protein from Treponema pallidum (strain Nichols).